The chain runs to 298 residues: MTDASHISPLEQARILSEALPHMQRYDEETIVIKYGGHAMGAEETAKAFARDIVLLEQTAINPVVVHGGGPQIATMLKRLGIKSEFAAGLRITDAATIEIVEMVLAGSINKQLVGYINEAGGKAVGLCGKDGNMVTACKATRTTVDPDSRIEEVIDLGFVGEPEKVDLTLLNQLIGHELIPVLAPLATSATGQTFNVNADTFAGAVAGALKAKRLLLLTDVPGVLDKSKQLIPELSVKDARRLIADGTISGGMIPKVETCIYALEQGVEGVVIIDGKTPHAVLLELFTNQGTGTLIHK.

Residues 69–70 (GG), Arg91, and Asn196 contribute to the substrate site.

The protein belongs to the acetylglutamate kinase family. ArgB subfamily.

It is found in the cytoplasm. It carries out the reaction N-acetyl-L-glutamate + ATP = N-acetyl-L-glutamyl 5-phosphate + ADP. It participates in amino-acid biosynthesis; L-arginine biosynthesis; N(2)-acetyl-L-ornithine from L-glutamate: step 2/4. Catalyzes the ATP-dependent phosphorylation of N-acetyl-L-glutamate. The chain is Acetylglutamate kinase from Rhodopseudomonas palustris (strain BisA53).